Reading from the N-terminus, the 173-residue chain is Small ribosomal subunit protein uS7 (173 aa).

This sequence belongs to the universal ribosomal protein uS7 family. In terms of assembly, part of the 30S ribosomal subunit. Contacts proteins S9 and S11.

Functionally, one of the primary rRNA binding proteins, it binds directly to 16S rRNA where it nucleates assembly of the head domain of the 30S subunit. Is located at the subunit interface close to the decoding center, probably blocks exit of the E-site tRNA. The polypeptide is Small ribosomal subunit protein uS7 (Orientia tsutsugamushi (strain Boryong) (Rickettsia tsutsugamushi)).